A 387-amino-acid chain; its full sequence is Proline-rich protein 5 (387 aa).

Interaction with RICTOR regions lie at residues 10 to 96 and 189 to 219; these read MSSP…LTKG and HESR…YGLY. The segment at 11–33 is disordered; sequence SSPSLSDLGKREPGAAGADERGT. The segment covering 18–33 has biased composition (basic and acidic residues); that stretch reads LGKREPGAAGADERGT. Phosphoserine is present on Ser-253. Disordered stretches follow at residues 262–347 and 365–387; these read NPVA…PETL and DFGR…PSVV. Residues 310 to 321 show a composition bias toward low complexity; that stretch reads SSPSPHSGPCPS. A Phosphoserine modification is found at Ser-373.

The protein belongs to the PROTOR family. In terms of assembly, associated component of the mechanistic target of rapamycin complex 2 (mTORC2). Binds directly to MTOR and RICTOR within the TORC2 complex.

Functionally, associated subunit of mTORC2, which regulates cell growth and survival in response to hormonal signals. mTORC2 is activated by growth factors, but, in contrast to mTORC1, seems to be nutrient-insensitive. mTORC2 seems to function upstream of Rho GTPases to regulate the actin cytoskeleton, probably by activating one or more Rho-type guanine nucleotide exchange factors. PRR5 plays an important role in regulation of PDGFRB expression and in modulation of platelet-derived growth factor signaling. May act as a tumor suppressor in breast cancer. In Rattus norvegicus (Rat), this protein is Proline-rich protein 5.